A 515-amino-acid chain; its full sequence is Bifunctional purine biosynthesis protein PurH (515 aa).

The region spanning 1–145 (MTKRALISVS…KNHASVTVVV (145 aa)) is the MGS-like domain.

Belongs to the PurH family.

The catalysed reaction is (6R)-10-formyltetrahydrofolate + 5-amino-1-(5-phospho-beta-D-ribosyl)imidazole-4-carboxamide = 5-formamido-1-(5-phospho-D-ribosyl)imidazole-4-carboxamide + (6S)-5,6,7,8-tetrahydrofolate. The enzyme catalyses IMP + H2O = 5-formamido-1-(5-phospho-D-ribosyl)imidazole-4-carboxamide. The protein operates within purine metabolism; IMP biosynthesis via de novo pathway; 5-formamido-1-(5-phospho-D-ribosyl)imidazole-4-carboxamide from 5-amino-1-(5-phospho-D-ribosyl)imidazole-4-carboxamide (10-formyl THF route): step 1/1. It participates in purine metabolism; IMP biosynthesis via de novo pathway; IMP from 5-formamido-1-(5-phospho-D-ribosyl)imidazole-4-carboxamide: step 1/1. In Streptococcus pyogenes serotype M18 (strain MGAS8232), this protein is Bifunctional purine biosynthesis protein PurH.